Here is a 368-residue protein sequence, read N- to C-terminus: Phospho-N-acetylmuramoyl-pentapeptide-transferase (368 aa).

Transmembrane regions (helical) follow at residues 34-54, 79-99, 102-122, 140-160, 176-196, 207-227, 247-267, 271-291, 296-316, and 345-365; these read GAVVTGALFVFLFGPWIIDHL, TPTMGGLMILSGLVVSTVLWA, LNPYVWIVLAVTLGFGFVGFY, ARLLIEAAIALVACYALVRLG, LVIKFGWMYVIFGAFVIVGAG, GLAIVPVMIASASFGLIAYLA, LAVLCGAVLGAGLGFLWFNAP, IFMGDTGSLALGGMLGSIAVA, IVLAVIGGLFVLEAVSVIVQV, and QIVIRFWIISVMLALVGLSTL.

Belongs to the glycosyltransferase 4 family. MraY subfamily. Requires Mg(2+) as cofactor.

The protein resides in the cell inner membrane. It catalyses the reaction UDP-N-acetyl-alpha-D-muramoyl-L-alanyl-gamma-D-glutamyl-meso-2,6-diaminopimeloyl-D-alanyl-D-alanine + di-trans,octa-cis-undecaprenyl phosphate = di-trans,octa-cis-undecaprenyl diphospho-N-acetyl-alpha-D-muramoyl-L-alanyl-D-glutamyl-meso-2,6-diaminopimeloyl-D-alanyl-D-alanine + UMP. It participates in cell wall biogenesis; peptidoglycan biosynthesis. Its function is as follows. Catalyzes the initial step of the lipid cycle reactions in the biosynthesis of the cell wall peptidoglycan: transfers peptidoglycan precursor phospho-MurNAc-pentapeptide from UDP-MurNAc-pentapeptide onto the lipid carrier undecaprenyl phosphate, yielding undecaprenyl-pyrophosphoryl-MurNAc-pentapeptide, known as lipid I. The chain is Phospho-N-acetylmuramoyl-pentapeptide-transferase from Bradyrhizobium sp. (strain ORS 278).